Consider the following 129-residue polypeptide: MEKNNKEDVTPLGGYILAKDPISFNEDRPVIQLRVRNSGDRPIQVGSHFHFFEVNKALQFNRAAAFGKRLNITATTAIRFEPGDEIEVSLIPIGGKQNVYGFNNLVDGWAGKSPVAIDEPVETTWLHAG.

The protein belongs to the urease beta subunit family. Heterotrimer of UreA (gamma), UreB (beta) and UreC (alpha) subunits. Three heterotrimers associate to form the active enzyme.

The protein resides in the cytoplasm. The enzyme catalyses urea + 2 H2O + H(+) = hydrogencarbonate + 2 NH4(+). It participates in nitrogen metabolism; urea degradation; CO(2) and NH(3) from urea (urease route): step 1/1. This Photorhabdus laumondii subsp. laumondii (strain DSM 15139 / CIP 105565 / TT01) (Photorhabdus luminescens subsp. laumondii) protein is Urease subunit beta.